A 344-amino-acid chain; its full sequence is Hydrophobic dipeptide epimerase (344 aa).

Residues T126 and 151–153 (KIK) each bind substrate. Mg(2+) contacts are provided by D184, E210, and D235. Residues K257 and 307–309 (DLD) contribute to the substrate site.

It belongs to the mandelate racemase/muconate lactonizing enzyme family. It depends on Mg(2+) as a cofactor.

Functionally, dipeptide epimerase with a preference for hydrophobic substrates. Catalyzes the epimerization of L-Ala-L-Thr, L-Ala-L-Met, L-Ala-L-His, L-Ala-L-Phe, L-Ala-L-Tyr, L-Ala-L-Trp, L-Ile-L-Ala, L-Ile-L-Ser, L-Ile-L-Met, L-Ile-L-His, L-Ile-L-Phe, L-Ile-L-Tyr, L-Ile-L-Trp, L-Phe-L-Met, L-Phe-L-His, L-Phe-L-Phe, L-Phe-L-Tyr, L-Phe-L-Trp, L-Phe-L-Ser, L-Phe-L-Thr and L-Phe-L-Lys (in vitro). This chain is Hydrophobic dipeptide epimerase, found in Roseobacter litoralis (strain ATCC 49566 / DSM 6996 / JCM 21268 / NBRC 15278 / OCh 149).